The chain runs to 1852 residues: Dihydropyridine-sensitive L-type skeletal muscle calcium channel subunit alpha-1 (1852 aa).

The Cytoplasmic segment spans residues 1 to 70; the sequence is MESGSGGGGG…KTCINIVEWK (70 aa). One copy of the I repeat lies at 57-354; it reads NPFRKTCINI…LVLGALSGEF (298 aa). Residues 71 to 86 traverse the membrane as a helical segment; the sequence is PFEIIILLTIFANCVA. Residues 87-107 lie on the Extracellular side of the membrane; it reads LAVFLPMPEEDTNNTNLTLES. N-linked (GlcNAc...) asparagine glycosylation is found at asparagine 99 and asparagine 102. Residues 108–127 traverse the membrane as a helical segment; that stretch reads LEYIFLVIFTLECFLKIVAY. Topologically, residues 128 to 139 are cytoplasmic; that stretch reads GLLFHEGAYLRN. The chain crosses the membrane as a helical span at residues 140–155; that stretch reads CWNILDFVIVFMGLFT. Residues 156–176 are Extracellular-facing; that stretch reads LVVDTINTIAGVPTEKGGGFD. The chain crosses the membrane as a helical span at residues 177–195; the sequence is MKALRAFRVLRPLRLVSGV. At 196–214 the chain is on the cytoplasmic side; it reads PSLQVVMSSILKSMLPLFH. Residues 215–234 traverse the membrane as a helical segment; sequence IALLVFFMVHIYAIMGLELF. The Extracellular segment spans residues 235-326; that stretch reads KCKMHKTCYY…WINDAMGNDW (92 aa). The N-linked (GlcNAc...) asparagine glycan is linked to asparagine 274. A helical transmembrane segment spans residues 327-351; that stretch reads PWIYFLTLILVGSFFILNLVLGALS. Residues 352–447 are Cytoplasmic-facing; sequence GEFTKEREES…RKCHVWVKSK (96 aa). The binding to the beta subunit stretch occupies residues 374 to 391; it reads QQMDEDLEGYMEWITHAE. An II repeat occupies 433–679; the sequence is NVVLRRKCHV…VFLAIAVDNL (247 aa). The helical transmembrane segment at 448 to 466 threads the bilayer; the sequence is FFNWWVLLVVLLNTLVIAM. At 467–481 the chain is on the extracellular side; the sequence is EHHNQTEGLTSFQDT. Residue asparagine 470 is glycosylated (N-linked (GlcNAc...) asparagine). A helical transmembrane segment spans residues 482–501; that stretch reads ANVILLACFTIEMVMKMYAF. At 502–509 the chain is on the cytoplasmic side; that stretch reads GPRAYFMS. The chain crosses the membrane as a helical span at residues 510–528; sequence IFNRFDCFVVTIGILEIIL. Residues 529–538 lie on the Extracellular side of the membrane; sequence VVSNIMTPLG. A helical transmembrane segment spans residues 539 to 557; it reads ISVMRCIRLLRLFKLTRYW. The Cytoplasmic segment spans residues 558-576; the sequence is TSLNNLVASLLNSVKSIAS. Residues 577–596 traverse the membrane as a helical segment; the sequence is LLLLLFLFIVIFALLGMQVF. At 597–651 the chain is on the extracellular side; sequence GGKFNFPDRVIQRSNFDNFPQALISVFQVLTGEEWDSIMYNGIMAHGGPQSPGIL. A helical membrane pass occupies residues 652-675; it reads VSIYFIILYVCGNFVLLNVFLAIA. Residues 676 to 815 are Cytoplasmic-facing; that stretch reads VDNLAEAESL…KLCHRIVNHT (140 aa). An III repeat occupies 802–1084; the sequence is HKFRKLCHRI…IFVGFVIVTF (283 aa). A helical transmembrane segment spans residues 816–834; the sequence is TFTNIILLFILLSSISLAA. The Extracellular segment spans residues 835-850; that stretch reads EDPIDPRSFRNKVLAY. The helical transmembrane segment at 851–870 threads the bilayer; that stretch reads ADIVFTTVFTIEIVLKMTVY. Topologically, residues 871 to 882 are cytoplasmic; that stretch reads GAFLHTGSFCRN. A helical transmembrane segment spans residues 883–901; it reads SFNILDLIVVGVSLLSMGM. Topologically, residues 902 to 908 are extracellular; that stretch reads ESSTISV. The chain crosses the membrane as a helical span at residues 909-927; that stretch reads VKILRVLRVLRPLRAINRA. Residues 928–946 are Cytoplasmic-facing; that stretch reads KGLKHVVQCMFVAIKTIGN. Residues 947–966 traverse the membrane as a helical segment; sequence IVLVTMLLDFMFACIGVQLF. Residues 967–1056 are Extracellular-facing; sequence KGKLYYCTDP…TGPLYNNRVG (90 aa). Residues 1004 to 1093 form a dihydropyridine binding region; that stretch reads RMWVNSDFNF…FQKQGEQEYK (90 aa). The chain crosses the membrane as a helical span at residues 1057–1081; the sequence is ISIFFIIYIIIIAFFMMNIFVGFVI. The Cytoplasmic segment spans residues 1082–1134; that stretch reads VTFQKQGEQEYKDCELDKNQRQCVQYALKARPLKCYIPKNPHQYRVWYFVTSC. Residues 1121 to 1405 form an IV repeat; sequence NPHQYRVWYF…LFVAIIMDNV (285 aa). The helical transmembrane segment at 1135-1153 threads the bilayer; the sequence is YFEYLMFFLIMLNTLCLGI. Over 1154 to 1168 the chain is Extracellular; the sequence is QHCNQSDHITKLSDT. N-linked (GlcNAc...) asparagine glycosylation occurs at asparagine 1157. The chain crosses the membrane as a helical span at residues 1169–1188; it reads LNLIFTVLFTGEMIVKLIAF. Residues 1189–1196 lie on the Cytoplasmic side of the membrane; sequence KAKGYFGD. The helical transmembrane segment at 1197–1215 threads the bilayer; it reads PWNVFDFIIVVGSIVDVVL. The Extracellular portion of the chain corresponds to 1216-1252; it reads SEVDAALEARGGLWCLHGCAEVNPMQAIAEAENVRVS. Residues 1253–1271 traverse the membrane as a helical segment; sequence ITFFRLFRVLRLIKLLNRS. Residues 1272 to 1290 are Cytoplasmic-facing; sequence EGIRNLLWTFIKSFQALPH. The chain crosses the membrane as a helical span at residues 1291 to 1310; that stretch reads VGLLIVMLFFIYAVIGMQMF. Residues 1311-1377 lie on the Extracellular side of the membrane; it reads GKVALVDGTE…GEEYTCGSSI (67 aa). The tract at residues 1358-1424 is dihydropyridine binding; that stretch reads LCDAKSDYGP…LGPHHLDEFK (67 aa). Positions 1370-1413 are phenylalkylamine binding; that stretch reads EYTCGSSIAVFYFLSFYILCAFLIINLFVAIIMDNVDYLTRDWS. A helical transmembrane segment spans residues 1378–1402; that stretch reads AVFYFLSFYILCAFLIINLFVAIIM. At 1403–1852 the chain is on the cytoplasmic side; sequence DNVDYLTRDW…TKPKENTSAV (450 aa). Residues 1418–1453 form the EF-hand domain; sequence HHLDEFKKIWAEYDPEATGRIKHLDVVTLLRRIQPP. Residues aspartate 1431, glutamate 1433, threonine 1435, arginine 1437, and aspartate 1442 each contribute to the Ca(2+) site. The disordered stretch occupies residues 1820-1852; sequence NRQSGKVTKRKRRPIPVPPGTKSTKPKENTSAV.

This sequence belongs to the calcium channel alpha-1 subunit (TC 1.A.1.11) family. Multisubunit complex consisting of alpha-1, alpha-2, beta and delta subunits in a 1:1:1:1 ratio. The channel activity is directed by the pore-forming and voltage-sensitive alpha-1 subunit. In many cases, this subunit is sufficient to generate voltage-sensitive calcium channel activity. The auxiliary subunits beta and alpha-2/delta linked by a disulfide bridge regulate the channel activity. An additional gamma subunit is present only in skeletal muscle L-type channel. In terms of processing, may be non-phosphorylated. In terms of tissue distribution, skeletal muscle.

It localises to the membrane. In terms of biological role, voltage-sensitive calcium channels (VSCC) mediate the entry of calcium ions into excitable cells and are also involved in a variety of calcium-dependent processes, including muscle contraction, gene expression, cell motility, cell division and cell death. The isoform alpha-1S gives rise to L-type calcium currents. Long-lasting (L-type) calcium channels belong to the 'high-voltage activated' (HVA) group. They are blocked by dihydropyridines (DHP), phenylalkylamines, and by benzothiazepines. Calcium channels containing the alpha-1S subunit play an important role in excitation-contraction coupling in skeletal muscle. The chain is Dihydropyridine-sensitive L-type skeletal muscle calcium channel subunit alpha-1 from Cyprinus carpio (Common carp).